We begin with the raw amino-acid sequence, 104 residues long: UPF0145 protein Hlac_1015 (104 aa).

Belongs to the UPF0145 family.

The polypeptide is UPF0145 protein Hlac_1015 (Halorubrum lacusprofundi (strain ATCC 49239 / DSM 5036 / JCM 8891 / ACAM 34)).